The following is a 105-amino-acid chain: Small ribosomal subunit protein uS10 (105 aa).

This sequence belongs to the universal ribosomal protein uS10 family. As to quaternary structure, part of the 30S ribosomal subunit.

Its function is as follows. Involved in the binding of tRNA to the ribosomes. The chain is Small ribosomal subunit protein uS10 from Rickettsia bellii (strain OSU 85-389).